The sequence spans 583 residues: L-galactono-1,4-lactone dehydrogenase 2, mitochondrial (583 aa).

The transit peptide at M1–P36 directs the protein to the mitochondrion. Positions A37–K78 are cleaved as a propeptide — removed in mature form. A helical membrane pass occupies residues Y45 to Y61. Positions T95–R266 constitute an FAD-binding PCMH-type domain.

It depends on FAD as a cofactor.

The protein localises to the mitochondrion membrane. It catalyses the reaction L-galactono-1,4-lactone + 4 Fe(III)-[cytochrome c] = L-dehydroascorbate + 4 Fe(II)-[cytochrome c] + 5 H(+). The protein operates within cofactor biosynthesis; L-ascorbate biosynthesis. Involved in the biosynthesis of ascorbic acid. The chain is L-galactono-1,4-lactone dehydrogenase 2, mitochondrial (GLDH2) from Oryza sativa subsp. japonica (Rice).